A 473-amino-acid chain; its full sequence is Spliceosome-associated protein CWC27 homolog (473 aa).

An N-acetylserine modification is found at S2. In terms of domain architecture, PPIase cyclophilin-type spans 11–166 (TNGKVLLKTT…NPHKIKSCEV (156 aa)). Positions 177 to 193 (REIKRPKKEKPEEEVKK) are enriched in basic and acidic residues. Disordered regions lie at residues 177 to 386 (REIK…EDQT) and 399 to 473 (QAIA…KERR). The stretch at 206 to 230 (SFGEEAEEEEEEVNRVSQSMKGKSK) forms a coiled coil. Residues 231 to 241 (SSHDLLKDDPH) show a composition bias toward basic and acidic residues. Positions 257–275 (GDLDDDGEDESAEYDEYVD) are enriched in acidic residues. 3 stretches are compositionally biased toward basic and acidic residues: residues 276–287 (GDEKNLMRERIA), 305–348 (EVEK…KRSE), and 360–372 (EYRREKQKYEALR). Positions 307–378 (EKKSVSRSEE…EALRKQQSKK (72 aa)) form a coiled coil. Residue S347 is modified to Phosphoserine. A compositionally biased stretch (acidic residues) spans 405–419 (PENDIPETEVEDDEG). 2 stretches are compositionally biased toward basic and acidic residues: residues 426 to 438 (QFEDKSRKVKDAS) and 458 to 473 (RREESKKLMREKKERR).

This sequence belongs to the cyclophilin-type PPIase family. As to quaternary structure, part of the activated spliceosome B/catalytic step 1 spliceosome, one of the forms of the spliceosome which has a well-formed active site but still cannot catalyze the branching reaction and is composed at least of 52 proteins, the U2, U5 and U6 snRNAs and the pre-mRNA. Recruited during early steps of activated spliceosome B maturation, it is probably one of the first proteins released from this complex as he matures to the spliceosome C complex. Component of the minor spliceosome, which splices U12-type introns.

It localises to the nucleus. Functionally, as part of the spliceosome, plays a role in pre-mRNA splicing. Probable inactive PPIase with no peptidyl-prolyl cis-trans isomerase activity. As a component of the minor spliceosome, involved in the splicing of U12-type introns in pre-mRNAs. This Macaca fascicularis (Crab-eating macaque) protein is Spliceosome-associated protein CWC27 homolog.